A 168-amino-acid polypeptide reads, in one-letter code: uncharacterized protein (168 aa).

The or 19 signal peptide spans 1 to 21; that stretch reads MKLLKALAVLSLATISSHSFA.

This is an uncharacterized protein from Haemophilus influenzae (strain ATCC 51907 / DSM 11121 / KW20 / Rd).